The primary structure comprises 104 residues: Large ribosomal subunit protein uL15z (104 aa).

This sequence belongs to the universal ribosomal protein uL15 family.

The sequence is that of Large ribosomal subunit protein uL15z (RPL27AA) from Arabidopsis thaliana (Mouse-ear cress).